A 298-amino-acid polypeptide reads, in one-letter code: Rhodomycin D methylesterase DauP (298 aa).

Positions 25 to 277 (PLLLIAGGNL…VEIENMGHAL (253 aa)) constitute an AB hydrolase-1 domain.

The protein belongs to the methyl esterase DnrP family.

The catalysed reaction is rhodomycin D + H2O = 10-carboxy-13-deoxycarminomycin + methanol + H(+). The enzyme catalyses 4-O-methylrhodomycin D + H2O = 10-carboxy-13-deoxydaunorubicin + methanol + H(+). The protein operates within antibiotic biosynthesis; daunorubicin biosynthesis. It participates in antibiotic biosynthesis; carminomycin biosynthesis. Its function is as follows. Involved in the biosynthesis of the anthracyclines carminomycin and daunorubicin (daunomycin) which are aromatic polyketide antibiotics that exhibit high cytotoxicity and are widely applied in the chemotherapy of a variety of cancers. Catalyzes the removal of methyl group from the carbomethoxy group of rhodomycin D (10-carbomethoxy-13-deoxycarminomycin) and 4-O-methylrhodomycin D to yield 10-carboxy-13-deoxycarminomycin and 10-carboxy-13-deoxydaunorubicin, respectively. Could be also involved in the decarboxylation of 10-carboxy-13-deoxycarminomycin and 10-carboxy-13-deoxydaunorubicin to yield 13-deoxycarminomycin and 13-deoxydaunorubicin, respectively. It seems that DauK may influence the ability of DauP to carry out the decarboxylation. The sequence is that of Rhodomycin D methylesterase DauP (dauP) from Streptomyces sp. (strain C5).